The following is a 110-amino-acid chain: UPF0122 protein SH1678 (110 aa).

This sequence belongs to the UPF0122 family.

Its function is as follows. Might take part in the signal recognition particle (SRP) pathway. This is inferred from the conservation of its genetic proximity to ftsY/ffh. May be a regulatory protein. This is UPF0122 protein SH1678 from Staphylococcus haemolyticus (strain JCSC1435).